The chain runs to 640 residues: Auxin efflux carrier component 3 (640 aa).

The Extracellular segment spans residues 1-7; that stretch reads MISWHDL. A helical membrane pass occupies residues 8–28; the sequence is YTVLTAVIPLYVAMILAYGSV. The Cytoplasmic segment spans residues 29-38; it reads RWWKIFSPDQ. A helical transmembrane segment spans residues 39-59; that stretch reads CSGINRFVAIFAVPLLSFHFI. (indol-3-yl)acetate is bound at residue Val-51. Residues 60 to 71 lie on the Extracellular side of the membrane; sequence STNNPYAMNLRF. A helical membrane pass occupies residues 72 to 92; the sequence is IAADTLQKIIMLSLLVLWANF. The Cytoplasmic segment spans residues 93-101; sequence TRSGSLEWS. A helical transmembrane segment spans residues 102–122; sequence ITIFSLSTLPNTLVMGIPLLI. (indol-3-yl)acetate-binding residues include Asn-112 and Leu-114. The Extracellular portion of the chain corresponds to 123 to 131; the sequence is AMYGEYSGS. The helical transmembrane segment at 132-152 threads the bilayer; the sequence is LMVQIVVLQCIIWYTLLLFLF. Tyr-145 is a (indol-3-yl)acetate binding site. Topologically, residues 153 to 500 are cytoplasmic; the sequence is EFRGAKMLIM…LIRNPNTYSS (348 aa). Ser-226, Ser-243, and Ser-283 each carry phosphoserine. The tract at residues 310–351 is disordered; it reads APNPEFSSTTTSTANKSVNKNPKDVNTNQQTTLPTGGKSNSH. Positions 314–348 are enriched in polar residues; the sequence is EFSSTTTSTANKSVNKNPKDVNTNQQTTLPTGGKS. At Thr-322 the chain carries Phosphothreonine. A Phosphoserine modification is found at Ser-366. 2 disordered regions span residues 372–391 and 404–471; these read AGLN…RSDQ and SHNG…SQRK. Residues 430–442 show a composition bias toward basic and acidic residues; that stretch reads GKEEEAERPKDAE. Residues 449-460 show a composition bias toward polar residues; it reads APNSTAALQSKT. The chain crosses the membrane as a helical span at residues 501 to 521; sequence LIGLIWALVAFRWHVAMPKII. Residues 522–524 are Extracellular-facing; that stretch reads QQS. Residues 525 to 545 traverse the membrane as a helical segment; that stretch reads ISILSDAGLGMAMFSLGLFMA. Residues 546-559 are Cytoplasmic-facing; that stretch reads LQPKLIACGNSVAT. A helical transmembrane segment spans residues 560 to 580; it reads FAMAVRFLTGPAVMAVAAIAI. Residues 581-585 are Extracellular-facing; sequence GLRGD. A helical transmembrane segment spans residues 586 to 606; it reads LLRVAIVQAALPQGIVPFVFA. 2 residues coordinate (indol-3-yl)acetate: Ile-600 and Val-601. The Cytoplasmic segment spans residues 607-619; it reads KEYNVHPAILSTG. A helical transmembrane segment spans residues 620 to 640; that stretch reads VIFGMLIALPITLVYYILLGL.

It belongs to the auxin efflux carrier (TC 2.A.69.1) family. As to quaternary structure, homodimer. In terms of tissue distribution, predominantly expressed at the lateral side of shoot endodermis cells as well as root pericycle and columella cells.

It is found in the cell membrane. With respect to regulation, auxin efflux carrier activity is competitively inhibited by naptalamate (N-1-naphthylphthalamic acid, NPA). Its function is as follows. Acts as a component of the auxin efflux carrier; this activity is enhanced when activated by PID-mediated phosphorylation. Seems to be involved in the lateral auxin transport system. Together with PIN4 and PIN7, involved in the connective auxin transport (CAT) that ensures communication across the shoot system, and modulates strigolactone-mediated shoot branching control. Binds auxins including indole-3-acetic acid (IAA). Coordinated polar localization of PIN3 is directly regulated by the vesicle trafficking process. This chain is Auxin efflux carrier component 3, found in Arabidopsis thaliana (Mouse-ear cress).